Consider the following 248-residue polypeptide: Adenosylcobinamide-GDP ribazoletransferase (248 aa).

Transmembrane regions (helical) follow at residues 36–56, 59–79, 114–134, 137–157, 170–190, and 199–219; these read FFLPVVAFIIGGMEFLIYLAL, FLPPNVIIVLLILFTAMITGG, GTIALIIDLLLKYQLLYSLVL, YSIAIVLAPIIGRISILFLCL, IFIGNMSKPIIFFITTIVLAL, and ATIIPFIGVLLITYLLYLLCL.

This sequence belongs to the CobS family. Mg(2+) is required as a cofactor.

The protein localises to the cell membrane. The enzyme catalyses alpha-ribazole + adenosylcob(III)inamide-GDP = adenosylcob(III)alamin + GMP + H(+). It carries out the reaction alpha-ribazole 5'-phosphate + adenosylcob(III)inamide-GDP = adenosylcob(III)alamin 5'-phosphate + GMP + H(+). Its pathway is cofactor biosynthesis; adenosylcobalamin biosynthesis; adenosylcobalamin from cob(II)yrinate a,c-diamide: step 7/7. Its function is as follows. Joins adenosylcobinamide-GDP and alpha-ribazole to generate adenosylcobalamin (Ado-cobalamin). Also synthesizes adenosylcobalamin 5'-phosphate from adenosylcobinamide-GDP and alpha-ribazole 5'-phosphate. The sequence is that of Adenosylcobinamide-GDP ribazoletransferase from Clostridium botulinum (strain Okra / Type B1).